A 1056-amino-acid chain; its full sequence is RNA cytidine acetyltransferase (1056 aa).

286-295 (GRGKSAALGI) serves as a coordination point for ATP. Positions 433–446 (QNNTSGRESTQTAV) are enriched in polar residues. The disordered stretch occupies residues 433–463 (QNNTSGRESTQTAVVSRDNKEKDSHLHSQSR). Positions 449 to 463 (RDNKEKDSHLHSQSR) are enriched in basic and acidic residues. Arg-475 lines the ATP pocket. Residues 566–706 (VLLPPIDPKD…VKLRDAKTLP (141 aa)) enclose the N-acetyltransferase domain. Acetyl-CoA is bound by residues 638–640 (IAT), 645–651 (ASMGYGS), and Asn-739. Ser-1001, Ser-1007, and Ser-1010 each carry phosphoserine.

This sequence belongs to the RNA cytidine acetyltransferase family. NAT10 subfamily. In terms of assembly, interacts with TAN1. Associates with 90S pre-ribosomal particles.

The protein resides in the nucleus. Its subcellular location is the nucleolus. The enzyme catalyses a cytidine in 18S rRNA + acetyl-CoA + ATP + H2O = an N(4)-acetylcytidine in 18S rRNA + ADP + phosphate + CoA + H(+). It carries out the reaction a cytidine in tRNA + acetyl-CoA + ATP + H2O = an N(4)-acetylcytidine in tRNA + ADP + phosphate + CoA + H(+). RNA cytidine acetyltransferase with specificity toward both 18S rRNA and tRNAs. Catalyzes the formation of N(4)-acetylcytidine (ac4C) at positions 1280 and 1773 in 18S rRNA. Required for early nucleolar cleavages of precursor rRNA at sites A0, A1 and A2 during 18S rRNA synthesis. Catalyzes the formation of ac4C at position 12 in serine and leucine tRNAs. Requires the tRNA-binding adapter protein TAN1 for full tRNA acetyltransferase activity but not for 18S rRNA acetylation. In Saccharomyces cerevisiae (strain ATCC 204508 / S288c) (Baker's yeast), this protein is RNA cytidine acetyltransferase.